Reading from the N-terminus, the 299-residue chain is Oxygen-dependent coproporphyrinogen-III oxidase (299 aa).

Ser-92 lines the substrate pocket. The a divalent metal cation site is built by His-96 and His-106. His-106 serves as the catalytic Proton donor. Position 108–110 (108–110 (NVR)) interacts with substrate. Positions 145 and 175 each coordinate a divalent metal cation. An important for dimerization region spans residues 240 to 275 (YVEFNLVWDRGTLFGLQTGGRTESILMSMPPLVRWE). 258–260 (GGR) provides a ligand contact to substrate.

This sequence belongs to the aerobic coproporphyrinogen-III oxidase family. In terms of assembly, homodimer. A divalent metal cation serves as cofactor.

Its subcellular location is the cytoplasm. The enzyme catalyses coproporphyrinogen III + O2 + 2 H(+) = protoporphyrinogen IX + 2 CO2 + 2 H2O. Its pathway is porphyrin-containing compound metabolism; protoporphyrin-IX biosynthesis; protoporphyrinogen-IX from coproporphyrinogen-III (O2 route): step 1/1. In terms of biological role, involved in the heme biosynthesis. Catalyzes the aerobic oxidative decarboxylation of propionate groups of rings A and B of coproporphyrinogen-III to yield the vinyl groups in protoporphyrinogen-IX. The protein is Oxygen-dependent coproporphyrinogen-III oxidase of Enterobacter sp. (strain 638).